We begin with the raw amino-acid sequence, 224 residues long: Large ribosomal subunit protein uL1 (224 aa).

The protein belongs to the universal ribosomal protein uL1 family. As to quaternary structure, part of the 50S ribosomal subunit.

In terms of biological role, binds directly to 23S rRNA. The L1 stalk is quite mobile in the ribosome, and is involved in E site tRNA release. Its function is as follows. Protein L1 is also a translational repressor protein, it controls the translation of the L11 operon by binding to its mRNA. This Borrelia recurrentis (strain A1) protein is Large ribosomal subunit protein uL1.